A 372-amino-acid chain; its full sequence is Aryl-hydrocarbon-interacting protein-like 1 (372 aa).

The PPIase FKBP-type domain maps to 53 to 145 (REVGQPMHII…DLDELQKEPQ (93 aa)). TPR repeat units follow at residues 178–211 (VPVLHGEGNRLFKLGRYEEASSKYQEAIICLRNL), 230–263 (NTLILNYCQCLLKKEEYYEVLEHTSDILRHHPGI), and 264–297 (VKAYYVRARAHAEVWNEAEAKADLQKVLELEPSM). Positions 325–372 (NMLSQGATWSPAEPPAEPPAESSTEPPAEPPAEPPAELTLTPGHPLQH) are disordered.

In terms of assembly, interacts with NUB1.

It localises to the cytoplasm. It is found in the nucleus. Its function is as follows. May be important in protein trafficking and/or protein folding and stabilization. This is Aryl-hydrocarbon-interacting protein-like 1 (AIPL1) from Saimiri boliviensis boliviensis (Bolivian squirrel monkey).